Here is a 95-residue protein sequence, read N- to C-terminus: Aspartyl/glutamyl-tRNA(Asn/Gln) amidotransferase subunit C (95 aa).

The protein belongs to the GatC family. In terms of assembly, heterotrimer of A, B and C subunits.

The enzyme catalyses L-glutamyl-tRNA(Gln) + L-glutamine + ATP + H2O = L-glutaminyl-tRNA(Gln) + L-glutamate + ADP + phosphate + H(+). It carries out the reaction L-aspartyl-tRNA(Asn) + L-glutamine + ATP + H2O = L-asparaginyl-tRNA(Asn) + L-glutamate + ADP + phosphate + 2 H(+). In terms of biological role, allows the formation of correctly charged Asn-tRNA(Asn) or Gln-tRNA(Gln) through the transamidation of misacylated Asp-tRNA(Asn) or Glu-tRNA(Gln) in organisms which lack either or both of asparaginyl-tRNA or glutaminyl-tRNA synthetases. The reaction takes place in the presence of glutamine and ATP through an activated phospho-Asp-tRNA(Asn) or phospho-Glu-tRNA(Gln). This is Aspartyl/glutamyl-tRNA(Asn/Gln) amidotransferase subunit C from Alcanivorax borkumensis (strain ATCC 700651 / DSM 11573 / NCIMB 13689 / SK2).